A 449-amino-acid chain; its full sequence is MAAVVRRMGPVWWGLTPALDLQMHLHPPPPPEIYCSCSDDLPELNILLVGGGDGRHILKTICQASRWPHRKLKFFIIESDLELLARHMLFLSLALEHPEQMGLQEKSELFLELFGNSLIRNKTASYLQEKSELFIRYVTDPDYQQSNVPLLNLSSIKFKERDKLEDIFKFWRNADPKLFPIDKYWDEKNRQNLGRRYDSRKGAYDWDLSMKLHDRGAGVINSREYNYWREKGVAFMNREGVYDIPNKTLASQMVVPQSSGKVLARGYWGDITASPYIAFGIETEEESLLQTANGVHVKSAQDIAQHNMISLFHELAYGKIYSVPASGQAESELAKTDSDYKTNEEQTVGLITLNNVEIHFLPRFNNFFNLLYFSCSMVHFLKPEYKFIAASKATLVLELTKFMVDLQTEKLQDYVTIVAKLAQEAGFTPTETIDWKTDYIAKFERAHDS.

The protein belongs to the DNAAF3 family.

Its subcellular location is the cytoplasm. The protein resides in the dynein axonemal particle. Functionally, required for the assembly of axonemal inner and outer dynein arms. Involved in preassembly of dyneins into complexes before their transport into cilia. This is Dynein axonemal assembly factor 3 (dnaaf3) from Xenopus tropicalis (Western clawed frog).